A 100-amino-acid chain; its full sequence is Urease subunit gamma (100 aa).

Belongs to the urease gamma subunit family. As to quaternary structure, heterotrimer of UreA (gamma), UreB (beta) and UreC (alpha) subunits. Three heterotrimers associate to form the active enzyme.

The protein localises to the cytoplasm. It carries out the reaction urea + 2 H2O + H(+) = hydrogencarbonate + 2 NH4(+). The protein operates within nitrogen metabolism; urea degradation; CO(2) and NH(3) from urea (urease route): step 1/1. The sequence is that of Urease subunit gamma from Prochlorococcus marinus (strain MIT 9313).